Consider the following 446-residue polypeptide: Packaging protein 1 (446 aa).

The interval M1–H71 is disordered. Over residues F31–E43 the composition is skewed to basic and acidic residues. G170–S177 contributes to the ATP binding site. The DNA-binding stretch occupies residues R439 to K446.

Belongs to the adenoviridae packaging protein 1 family. In terms of assembly, homodimer. Part of a genome packaging complex composed of packaging proteins 1, 2 and 3; this complex specifically binds to the packaging sequence on the left end of viral genomic DNA and performs packaging of the viral genome. Interacts with protein 33K.

The protein localises to the virion. It is found in the host nucleus. It localises to the host nucleoplasm. Its subcellular location is the host nucleolus. In terms of biological role, component of the packaging machinery which encapsidates the viral DNA into preformed capsids and transcriptional activator of the viral major late promoter (MLP). Binds, along with packaging proteins 2 and 3, to the specific packaging sequence on the left end of viral genomic DNA and displays ATPase activity thereby providing the power stroke of the packaging machinery. The activity of packaging protein IVa2 is stimulated by protein 33K which acts as a terminase. May be the protein that pumps DNA into the capsid powered by ATP hydrolysis. Specifically binds to the 5'-CG-3' nucleotides of the repeats making up the packaging sequence. Component of the DEF-A and DEF-B transcription factors that bind downstream elements of the major late promoter (MLP), and stimulate transcription from the MLP after initiation of viral DNA replication. DEF-A is a heterodimer packaging proteins 1 and 2 and DEF-B is a homodimer of packaging protein 1. This Canine adenovirus serotype 2 (strain Toronto A 26-61) (CAdV-2) protein is Packaging protein 1.